A 310-amino-acid polypeptide reads, in one-letter code: tRNA-cytidine(32) 2-sulfurtransferase (310 aa).

The PP-loop motif motif lies at 45–50 (SGGKDS). C120, C123, and C211 together coordinate [4Fe-4S] cluster.

The protein belongs to the TtcA family. Homodimer. The cofactor is Mg(2+). [4Fe-4S] cluster is required as a cofactor.

Its subcellular location is the cytoplasm. The catalysed reaction is cytidine(32) in tRNA + S-sulfanyl-L-cysteinyl-[cysteine desulfurase] + AH2 + ATP = 2-thiocytidine(32) in tRNA + L-cysteinyl-[cysteine desulfurase] + A + AMP + diphosphate + H(+). The protein operates within tRNA modification. Functionally, catalyzes the ATP-dependent 2-thiolation of cytidine in position 32 of tRNA, to form 2-thiocytidine (s(2)C32). The sulfur atoms are provided by the cysteine/cysteine desulfurase (IscS) system. The chain is tRNA-cytidine(32) 2-sulfurtransferase from Shewanella oneidensis (strain ATCC 700550 / JCM 31522 / CIP 106686 / LMG 19005 / NCIMB 14063 / MR-1).